The following is a 269-amino-acid chain: 4-hydroxy-tetrahydrodipicolinate reductase (269 aa).

NAD(+) contacts are provided by residues 11-16 and E37; that span reads GASGRM. R38 is a binding site for NADP(+). Residues 101 to 103 and 125 to 128 contribute to the NAD(+) site; these read GTT and AGNM. The Proton donor/acceptor role is filled by H158. H159 provides a ligand contact to (S)-2,3,4,5-tetrahydrodipicolinate. The active-site Proton donor is the K162. 168 to 169 lines the (S)-2,3,4,5-tetrahydrodipicolinate pocket; that stretch reads GT.

It belongs to the DapB family.

It is found in the cytoplasm. The catalysed reaction is (S)-2,3,4,5-tetrahydrodipicolinate + NAD(+) + H2O = (2S,4S)-4-hydroxy-2,3,4,5-tetrahydrodipicolinate + NADH + H(+). It catalyses the reaction (S)-2,3,4,5-tetrahydrodipicolinate + NADP(+) + H2O = (2S,4S)-4-hydroxy-2,3,4,5-tetrahydrodipicolinate + NADPH + H(+). It participates in amino-acid biosynthesis; L-lysine biosynthesis via DAP pathway; (S)-tetrahydrodipicolinate from L-aspartate: step 4/4. Its function is as follows. Catalyzes the conversion of 4-hydroxy-tetrahydrodipicolinate (HTPA) to tetrahydrodipicolinate. The chain is 4-hydroxy-tetrahydrodipicolinate reductase from Ruegeria sp. (strain TM1040) (Silicibacter sp.).